The sequence spans 57 residues: Andropin (57 aa).

An N-terminal signal peptide occupies residues methionine 1–alanine 23.

This sequence belongs to the andropin family. In terms of tissue distribution, ejaculatory duct of adult males.

The protein resides in the secreted. Its function is as follows. Male-specific peptide with moderate activity against Gram-positive bacteria. The polypeptide is Andropin (Anp) (Drosophila melanogaster (Fruit fly)).